A 565-amino-acid polypeptide reads, in one-letter code: DNA-dependent metalloprotease SPRTN (565 aa).

The 108-residue stretch at 23–130 (RALFLEFNDT…RTGANISVYH (108 aa)) folds into the SprT-like domain. Histidine 88 provides a ligand contact to Zn(2+). Residue glutamate 89 is part of the active site. Residues histidine 92 and histidine 107 each contribute to the Zn(2+) site. A disordered region spans residues 191 to 219 (EPENYPQKRKRKNDPTISEVNSSSHVKGK). Residues 205 to 215 (PTISEVNSSSH) show a composition bias toward polar residues. An SHP-box motif is present at residues 231–239 (FSGTGYKLF). Positions 288–295 (STPAQSIL) match the PIP-box motif. Residues 349 to 389 (TLPSPSIQSTSQKPQKDISFGFTLPSQSFPSTSPGSNSENK) form a disordered region. 2 stretches are compositionally biased toward polar residues: residues 351-361 (PSPSIQSTSQK) and 372-386 (LPSQSFPSTSPGSNS). The UBZ4-type 1 zinc-finger motif lies at 436-463 (KVSCPVCGTEVLECKINDHLDTCTSSGP). Zn(2+) contacts are provided by cysteine 439, cysteine 442, histidine 454, and cysteine 458. The short motif at 476-499 (QSFPSTSQGSNSAIKEPLYKKLQI) is the Nuclear localization signal element. The UBZ4-type 2 zinc finger occupies 537 to 564 (KVCCPVCGTDVLQDKINDHLDTCLQNCN). Positions 540, 543, 555, and 559 each coordinate Zn(2+).

The protein belongs to the Spartan family. Homodimer. Zn(2+) is required as a cofactor. In terms of processing, autocatalytically cleaved in response to double-stranded DNA-binding: autocatalytic cleavage takes place in trans and leads to inactivation.

It localises to the nucleus. Its subcellular location is the chromosome. With respect to regulation, DNA-binding activates the protease activity: single-stranded DNA-binding specifically activates ability to cleave covalent DNA-protein cross-links (DPCs). In contrast, double-stranded DNA-binding specifically activates autocatalytic cleavage, and subsequent inactivation. Its function is as follows. DNA-dependent metalloendopeptidase that mediates the proteolytic cleavage of covalent DNA-protein cross-links (DPCs) during DNA synthesis, thereby playing a key role in maintaining genomic integrity. DPCs are highly toxic DNA lesions that interfere with essential chromatin transactions, such as replication and transcription, and which are induced by reactive agents, such as UV light or formaldehyde. Associates with the DNA replication machinery and specifically removes DPCs during DNA synthesis. Catalyzes proteolytic cleavage of the hmces DNA-protein cross-link following unfolding by the brip1/fancj helicase. Acts as a pleiotropic protease for DNA-binding proteins cross-linked with DNA, such as top1, top2a, histones H3 and H4. Mediates degradation of DPCs that are not ubiquitinated, while it is not able to degrade ubiquitinated DPCs. SPRTN activation requires polymerase collision with DPCs followed by helicase bypass of DPCs. May also act as a 'reader' of ubiquitinated pcna: facilitates chromatin association of rad18 and is required for efficient pcna monoubiquitination, promoting a feed-forward loop to enhance pcna ubiquitination and translesion DNA synthesis. Acts as a regulator of translesion DNA synthesis by recruiting vcp/p97 to sites of DNA damage. This Xenopus laevis (African clawed frog) protein is DNA-dependent metalloprotease SPRTN.